Reading from the N-terminus, the 248-residue chain is 2,3-bisphosphoglycerate-dependent phosphoglycerate mutase (248 aa).

Residues 8–15, 21–22, R60, 87–90, K98, 114–115, and 183–184 contribute to the substrate site; these read RHGESTWN, TG, ERHY, RR, and GN. Catalysis depends on H9, which acts as the Tele-phosphohistidine intermediate. E87 (proton donor/acceptor) is an active-site residue.

This sequence belongs to the phosphoglycerate mutase family. BPG-dependent PGAM subfamily. As to quaternary structure, homodimer.

It carries out the reaction (2R)-2-phosphoglycerate = (2R)-3-phosphoglycerate. It functions in the pathway carbohydrate degradation; glycolysis; pyruvate from D-glyceraldehyde 3-phosphate: step 3/5. Functionally, catalyzes the interconversion of 2-phosphoglycerate and 3-phosphoglycerate. The protein is 2,3-bisphosphoglycerate-dependent phosphoglycerate mutase of Burkholderia orbicola (strain MC0-3).